The chain runs to 215 residues: Ribosome maturation factor RimP (215 aa).

A disordered region spans residues 180-215 (KDNRARKEAKKRRGEPDDDVPEGAEADATEEHEQES). A compositionally biased stretch (acidic residues) spans 195–207 (PDDDVPEGAEADA).

It belongs to the RimP family.

The protein localises to the cytoplasm. Functionally, required for maturation of 30S ribosomal subunits. This chain is Ribosome maturation factor RimP, found in Mesorhizobium japonicum (strain LMG 29417 / CECT 9101 / MAFF 303099) (Mesorhizobium loti (strain MAFF 303099)).